The chain runs to 423 residues: Glycine amidinotransferase, mitochondrial (423 aa).

The N-terminal 43 residues, 1–43 (MLRVRCLRGGSRGAEAVHYIGSRLGRTLTGWVQRTFQSTQAAT), are a transit peptide targeting the mitochondrion. The disordered stretch occupies residues 43-63 (TASSRNSFAADDKATEPLPKD). A phosphoserine mark is found at Ser46 and Ser49. Positions 52 to 61 (ADDKATEPLP) are enriched in basic and acidic residues. Asp170 lines the arginine pocket. Active-site residues include Asp254 and His303. 4 residues coordinate arginine: Asp305, Arg322, Ser354, and Ser355. Lys385 is modified (N6-acetyllysine). The Amidino-cysteine intermediate role is filled by Cys407.

This sequence belongs to the amidinotransferase family. As to quaternary structure, homodimer.

It localises to the mitochondrion inner membrane. It catalyses the reaction L-arginine + glycine = guanidinoacetate + L-ornithine. The catalysed reaction is 4-aminobutanoate + L-arginine = 4-guanidinobutanoate + L-ornithine. It carries out the reaction beta-alanine + L-arginine = 3-guanidinopropanoate + L-ornithine. The enzyme catalyses taurine + L-arginine = taurocyamine + L-ornithine. It participates in amine and polyamine biosynthesis; creatine biosynthesis; creatine from L-arginine and glycine: step 1/2. Transamidinase that catalyzes the transfer of the amidino group of L-arginine onto the amino moiety of acceptor metabolites such as glycine, beta-alanine, gamma-aminobutyric acid (GABA) and taurine yielding the corresponding guanidine derivatives. Catalyzes the rate-limiting step of creatine biosynthesis, namely the transfer of the amidino group from L-arginine to glycine to generate guanidinoacetate, which is then methylated by GAMT to form creatine. Provides creatine as a source for ATP generation in tissues with high energy demands, in particular skeletal muscle, heart and brain. This is Glycine amidinotransferase, mitochondrial (GATM) from Macaca fascicularis (Crab-eating macaque).